Consider the following 508-residue polypeptide: Serine/threonine protein kinase OSK3 (508 aa).

Residues 17–269 (YNLGRTLGIG…IREIREHQWF (253 aa)) form the Protein kinase domain. ATP contacts are provided by residues 23 to 31 (LGIGSFGKV) and K46. The active-site Proton acceptor is the D140. A UBA domain is found at 290–330 (MIDEDTLQDVVNLGYGKDHVCESLRNRLQNEATVAYYLLLD). Positions 459 to 507 (NGRLPAVIKFEIQLYKTRDEKYLLDMQRVTGPQLLFLDFCADFLTKLRV) constitute a KA1 domain.

This sequence belongs to the protein kinase superfamily. Ser/Thr protein kinase family. As to quaternary structure, interacts with HDR1. As to expression, strongly expressed in immature seeds. Mostly expressed in panicles, and to a lower extent, in leaf sheaths.

It localises to the nucleus. It catalyses the reaction L-seryl-[protein] + ATP = O-phospho-L-seryl-[protein] + ADP + H(+). It carries out the reaction L-threonyl-[protein] + ATP = O-phospho-L-threonyl-[protein] + ADP + H(+). This Oryza sativa subsp. indica (Rice) protein is Serine/threonine protein kinase OSK3.